The primary structure comprises 44 residues: Large ribosomal subunit protein bL34 (44 aa).

A disordered region spans residues 1–26 (MQRTLGGTNRKRKRTSGFRARMRTPD). Residues 9–22 (NRKRKRTSGFRARM) show a composition bias toward basic residues.

Belongs to the bacterial ribosomal protein bL34 family.

In Trichormus variabilis (strain ATCC 29413 / PCC 7937) (Anabaena variabilis), this protein is Large ribosomal subunit protein bL34.